The chain runs to 426 residues: D-tagatose-1,6-bisphosphate aldolase subunit KbaZ (426 aa).

It belongs to the GatZ/KbaZ family. KbaZ subfamily. Forms a complex with KbaY.

It participates in carbohydrate metabolism; D-tagatose 6-phosphate degradation; D-glyceraldehyde 3-phosphate and glycerone phosphate from D-tagatose 6-phosphate: step 2/2. Functionally, component of the tagatose-1,6-bisphosphate aldolase KbaYZ that is required for full activity and stability of the Y subunit. Could have a chaperone-like function for the proper and stable folding of KbaY. When expressed alone, KbaZ does not show any aldolase activity. This is D-tagatose-1,6-bisphosphate aldolase subunit KbaZ from Escherichia coli O6:K15:H31 (strain 536 / UPEC).